We begin with the raw amino-acid sequence, 559 residues long: N-acetylglucosamine-6-sulfatase (559 aa).

Residues 1 to 26 (MRFLSLAPDRPRRGGPRHLPSGSPAP) are disordered. An N-terminal signal peptide occupies residues 1–47 (MRFLSLAPDRPRRGGPRHLPSGSPAPPPPPPLLLLLLLGGCLGVSGA). 3 residues coordinate Ca(2+): Asp-62, Asp-63, and Cys-98. Catalysis depends on Cys-98, which acts as the Nucleophile. Position 98 is a 3-oxoalanine (Cys) (Cys-98). N-linked (GlcNAc...) asparagine glycans are attached at residues Asn-118, Asn-124, Asn-190, Asn-205, Asn-217, Asn-286, and Asn-324. Residues Asp-333 and Asn-334 each contribute to the Ca(2+) site. Asn-369, Asn-394, Asn-412, Asn-429, Asn-456, and Asn-487 each carry an N-linked (GlcNAc...) asparagine glycan. A Phosphoserine modification is found at Ser-548.

The protein belongs to the sulfatase family. The cofactor is Ca(2+). In terms of processing, processed by internal peptidase. Post-translationally, the conversion to 3-oxoalanine (also known as C-formylglycine, FGly), of a serine or cysteine residue in prokaryotes and of a cysteine residue in eukaryotes, is critical for catalytic activity.

It is found in the lysosome. It catalyses the reaction Hydrolysis of the 6-sulfate groups of the N-acetyl-D-glucosamine 6-sulfate units of heparan sulfate and keratan sulfate.. In terms of biological role, hydrolyzes 6-sulfate groups in N-acetyl-d-glucosaminide units of heparin sulfate and keratan sulfate. This is N-acetylglucosamine-6-sulfatase (GNS) from Capra hircus (Goat).